The sequence spans 479 residues: Cardiolipin synthase A (479 aa).

2 helical membrane-spanning segments follow: residues 8 to 28 (IFGY…IHAV) and 38 to 58 (IAWA…YLVF). PLD phosphodiesterase domains are found at residues 218–245 (VNFR…GDEY) and 392–419 (QPGF…DNRS). Residues His-223, Lys-225, Asp-230, His-397, Lys-399, and Asp-404 contribute to the active site.

Belongs to the phospholipase D family. Cardiolipin synthase subfamily. ClsA sub-subfamily.

The protein localises to the cell inner membrane. The catalysed reaction is 2 a 1,2-diacyl-sn-glycero-3-phospho-(1'-sn-glycerol) = a cardiolipin + glycerol. Functionally, catalyzes the reversible phosphatidyl group transfer from one phosphatidylglycerol molecule to another to form cardiolipin (CL) (diphosphatidylglycerol) and glycerol. This Pseudomonas fluorescens (strain ATCC BAA-477 / NRRL B-23932 / Pf-5) protein is Cardiolipin synthase A.